The primary structure comprises 241 residues: MKTKLTVLITFIILVLLGFWQLNRLKEKKLFLASMQENLTSPAIDLAKIQDNLPYHKVKITGHFLPDKDIYLYGRRSMSSEKDGYYLVTPFKTDEDKIILVARGWFSNRNKNIITQATNDQPHELIGVTMPSEKTRSYLPANDIKNNVWLTLDLQEASKVLGLNLENFYLIEESKDISNLDILLPLSINHLAAIRNDHLEYAFTWFGLAASLVVIYRIYKRSVSSRGLETRSRIKQDKSSF.

The next 2 helical transmembrane spans lie at 5–25 (LTVL…LNRL) and 199–219 (LEYA…YRIY).

Belongs to the SURF1 family.

The protein resides in the cell membrane. The polypeptide is SURF1-like protein (Rickettsia bellii (strain RML369-C)).